Here is a 118-residue protein sequence, read N- to C-terminus: Myotrophin (118 aa).

C2 is subject to N-acetylcysteine. One copy of the ANK 1 repeat lies at 2 to 30 (CDKEFMWALKNGDLDEVKDYVAKGEDVNR). Residues K4, K11, and K24 each carry the N6-acetyllysine modification. Residue T31 is modified to Phosphothreonine. ANK repeat units lie at residues 34–66 (GGRKPLHYAADCGQLEILEFLLLKGADINAPDK) and 67–99 (HHITPLLSAVYEGHVSCVKLLLSKGADKTVKGP).

It belongs to the myotrophin family. Interacts with RELA. Interacts with the heterodimer formed by CAPZA1 and CAPZB.

Its subcellular location is the cytoplasm. The protein localises to the nucleus. The protein resides in the perinuclear region. Its function is as follows. Promotes dimerization of NF-kappa-B subunits and regulates NF-kappa-B transcription factor activity. Promotes growth of cardiomyocytes, but not cardiomyocyte proliferation. Promotes cardiac muscle hypertrophy. Plays a role in the regulation of the growth of actin filaments. Inhibits the activity of the F-actin-capping protein complex formed by the CAPZA1 and CAPZB heterodimer. The chain is Myotrophin (MTPN) from Bos taurus (Bovine).